We begin with the raw amino-acid sequence, 146 residues long: Hemoglobin subunit beta (146 aa).

The 145-residue stretch at 2 to 146 (HWSAEEKQLI…VAHSLARVYH (145 aa)) folds into the Globin domain. Heme b-binding residues include histidine 63 and histidine 92.

The protein belongs to the globin family. As to quaternary structure, heterotetramer of two alpha chains and two beta chains. Red blood cells.

Its function is as follows. Involved in oxygen transport from the lung to the various peripheral tissues. The protein is Hemoglobin subunit beta (HBB) of Microcephalophis gracilis (Graceful small-headed sea snake).